The following is a 190-amino-acid chain: dCTP deaminase, dUMP-forming (190 aa).

DCTP is bound by residues 101–106 (KSSLGR), Asp-119, 127–129 (TLE), Gln-148, Tyr-162, and Gln-174. Glu-129 serves as the catalytic Proton donor/acceptor. A disordered region spans residues 161-190 (PYGSSGVGSKYQGQRGPTPSRSYQNFIRST). Polar residues predominate over residues 171-190 (YQGQRGPTPSRSYQNFIRST).

This sequence belongs to the dCTP deaminase family. As to quaternary structure, homotrimer.

It carries out the reaction dCTP + 2 H2O = dUMP + NH4(+) + diphosphate. It participates in pyrimidine metabolism; dUMP biosynthesis; dUMP from dCTP: step 1/1. Functionally, bifunctional enzyme that catalyzes both the deamination of dCTP to dUTP and the hydrolysis of dUTP to dUMP without releasing the toxic dUTP intermediate. This is dCTP deaminase, dUMP-forming from Mycobacterium marinum (strain ATCC BAA-535 / M).